We begin with the raw amino-acid sequence, 116 residues long: Putative pterin-4-alpha-carbinolamine dehydratase (116 aa).

Belongs to the pterin-4-alpha-carbinolamine dehydratase family.

It catalyses the reaction (4aS,6R)-4a-hydroxy-L-erythro-5,6,7,8-tetrahydrobiopterin = (6R)-L-erythro-6,7-dihydrobiopterin + H2O. This chain is Putative pterin-4-alpha-carbinolamine dehydratase, found in Xylella fastidiosa (strain M12).